Consider the following 124-residue polypeptide: Fluoride-specific ion channel FluC 2 (124 aa).

4 helical membrane passes run 1-21 (MNFLLAGIGASIGAMLRYAIT), 36-58 (SNLPTPTLFINLTGAFILGFIFG), 63-85 (VFIYAIVGTGVLGGYTTFSTMNT), and 104-124 (LSSYLGGLILVFVGYYLAILF). Positions 75 and 78 each coordinate Na(+).

It belongs to the fluoride channel Fluc/FEX (TC 1.A.43) family. As to quaternary structure, heterodimer composed of FluC1 and FluC2. Neither FluC1 nor FluC2 alone catalyzes fluoride efflux from liposomes.

Its subcellular location is the cell membrane. It carries out the reaction fluoride(in) = fluoride(out). Its activity is regulated as follows. Na(+) is not transported, but it plays an essential structural role and its presence is essential for fluoride channel function. Functionally, fluoride-specific ion channel. Important for reducing fluoride concentration in the cell, thus reducing its toxicity. This Lactobacillus acidophilus (strain ATCC 700396 / NCK56 / N2 / NCFM) protein is Fluoride-specific ion channel FluC 2.